The following is a 403-amino-acid chain: tRNA(Met) cytidine acetate ligase (403 aa).

ATP-binding positions include 7–20, Gly-102, Asn-168, and Arg-193; that span reads IVEY…HLYH.

The protein belongs to the TmcAL family.

It localises to the cytoplasm. The enzyme catalyses cytidine(34) in elongator tRNA(Met) + acetate + ATP = N(4)-acetylcytidine(34) in elongator tRNA(Met) + AMP + diphosphate. Functionally, catalyzes the formation of N(4)-acetylcytidine (ac(4)C) at the wobble position of elongator tRNA(Met), using acetate and ATP as substrates. First activates an acetate ion to form acetyladenylate (Ac-AMP) and then transfers the acetyl group to tRNA to form ac(4)C34. This is tRNA(Met) cytidine acetate ligase from Clostridium tetani (strain Massachusetts / E88).